Reading from the N-terminus, the 128-residue chain is Large ribosomal subunit protein bL12 (128 aa).

The protein belongs to the bacterial ribosomal protein bL12 family. In terms of assembly, homodimer. Part of the ribosomal stalk of the 50S ribosomal subunit. Forms a multimeric L10(L12)X complex, where L10 forms an elongated spine to which 2 to 4 L12 dimers bind in a sequential fashion. Binds GTP-bound translation factors.

In terms of biological role, forms part of the ribosomal stalk which helps the ribosome interact with GTP-bound translation factors. Is thus essential for accurate translation. This Sulfurihydrogenibium sp. (strain YO3AOP1) protein is Large ribosomal subunit protein bL12.